The chain runs to 698 residues: Probable Xaa-Pro aminopeptidase P (698 aa).

Positions 509, 520, 604, and 618 each coordinate Mn(2+).

Belongs to the peptidase M24B family. The cofactor is Mn(2+).

It catalyses the reaction Release of any N-terminal amino acid, including proline, that is linked to proline, even from a dipeptide or tripeptide.. In terms of biological role, catalyzes the removal of a penultimate prolyl residue from the N-termini of peptides. This Trichophyton verrucosum (strain HKI 0517) protein is Probable Xaa-Pro aminopeptidase P (AMPP).